The sequence spans 542 residues: E3 ubiquitin-protein ligase RNF217 (542 aa).

Disordered stretches follow at residues 1 to 140 (MGEE…TRVG) and 176 to 216 (APAS…TDSL). The span at 37–50 (SARAPPLRAASAEP) shows a compositional bias: low complexity. Residues 122–132 (DEQQEAPPGEE) show a composition bias toward acidic residues. Residues 185–196 (PASPPGAPPVLN) are compositionally biased toward pro residues. The span at 197–213 (PPSTRSSFPSPRLSLPT) shows a compositional bias: low complexity. The tract at residues 259-478 (MVLMCRVCLE…LSIFGCKYRY (220 aa)) is TRIAD supradomain. Residues Cys-263, Cys-266, Cys-283, Cys-286, Cys-383, Cys-386, His-391, Cys-396, Cys-423, and Cys-426 each contribute to the Zn(2+) site. Residues 263 to 309 (CRVCLEDKPIKPLPCCKKAVCEECLKVYLSAQVQLGQVEIKCPITEC) form an RING-type 1 zinc finger. The segment at 328-396 (IKYKYFLELG…HSPWHEGVNC (69 aa)) adopts an IBR-type zinc-finger fold. An RING-type 2; atypical zinc finger spans residues 423 to 452 (CPKCKIHIQRTEGCDHMTCSQCNTNFCYRC). Cys-436 is an active-site residue. Cys-441, Cys-444, Cys-449, Cys-452, His-465, and Cys-474 together coordinate Zn(2+). Residues 503–523 (LIMVLGLALGAIAVVIGLFVF) form a helical membrane-spanning segment.

It belongs to the RBR family. RNF217 subfamily. In terms of assembly, interacts with HAX1. As to expression, mainly expressed in testis and skeletal muscle.

It is found in the membrane. The protein localises to the cytoplasm. It carries out the reaction [E2 ubiquitin-conjugating enzyme]-S-ubiquitinyl-L-cysteine + [acceptor protein]-L-lysine = [E2 ubiquitin-conjugating enzyme]-L-cysteine + [acceptor protein]-N(6)-ubiquitinyl-L-lysine.. The protein operates within protein modification; protein ubiquitination. Its function is as follows. E3 ubiquitin-protein ligase which accepts ubiquitin from E2 ubiquitin-conjugating enzymes in the form of a thioester and then directly transfers the ubiquitin to targeted substrates. Mediates the degradation of the iron exporter ferroportin/SLC40A1 and thus regulates iron homeostasis. The polypeptide is E3 ubiquitin-protein ligase RNF217 (RNF217) (Homo sapiens (Human)).